A 278-amino-acid chain; its full sequence is MSTHRFKPSYDESESEDDYLGSVLDNKDESDDDFSSLSFGALNSAQKKLREQSETQRPPSRKSSKNQESDDSDSDSDDQFFEDKKSKKTKDKKSKRSKHAPAEASFKRPVPKIREIPGLKSAKDSTLYTDIRFDAAYGKADLNRVRKDYAFLDELRQKEIAEMKAVLKNDKLRRKMSQREIEDLELQVKSLQSRLDTLKNRDLSTKIISDHKKQQMEKMKKGEQVNPYYLKKSEQRKMIQKAKFETMKASQREKVMERKRKRKLGREFRQLEFREPQR.

The interval 1–118 is disordered; it reads MSTHRFKPSY…PVPKIREIPG (118 aa). The segment covering 69–80 has biased composition (acidic residues); that stretch reads SDDSDSDSDDQF. Residues 86-99 are compositionally biased toward basic residues; the sequence is SKKTKDKKSKRSKH. The stretch at 165 to 204 forms a coiled coil; it reads AVLKNDKLRRKMSQREIEDLELQVKSLQSRLDTLKNRDLS.

Belongs to the RRP36 family. As to quaternary structure, associates with 90S and pre-40S pre-ribosomal particles.

It is found in the nucleus. Its subcellular location is the nucleolus. Its function is as follows. Component of the 90S pre-ribosome involved in the maturation of rRNAs. Required for early cleavages of the pre-RNAs in the 40S ribosomal subunit maturation pathway. This chain is rRNA biogenesis protein RRP36 (RRP36), found in Clavispora lusitaniae (strain ATCC 42720) (Yeast).